A 188-amino-acid polypeptide reads, in one-letter code: dCTP deaminase (188 aa).

Residues 111–116 (KSTYAR), 135–137 (TLE), Gln-156, Tyr-170, and Gln-180 each bind dCTP. Glu-137 serves as the catalytic Proton donor/acceptor.

It belongs to the dCTP deaminase family. Homotrimer.

The enzyme catalyses dCTP + H2O + H(+) = dUTP + NH4(+). Its pathway is pyrimidine metabolism; dUMP biosynthesis; dUMP from dCTP (dUTP route): step 1/2. Functionally, catalyzes the deamination of dCTP to dUTP. The protein is dCTP deaminase of Nitrosococcus oceani (strain ATCC 19707 / BCRC 17464 / JCM 30415 / NCIMB 11848 / C-107).